A 70-amino-acid chain; its full sequence is ATP synthase subunit c (70 aa).

Transmembrane regions (helical) follow at residues 3 to 23 and 44 to 64; these read ALAA…IGIA and LFFI…VIAI.

This sequence belongs to the ATPase C chain family. F-type ATPases have 2 components, F(1) - the catalytic core - and F(0) - the membrane proton channel. F(1) has five subunits: alpha(3), beta(3), gamma(1), delta(1), epsilon(1). F(0) has three main subunits: a(1), b(2) and c(10-14). The alpha and beta chains form an alternating ring which encloses part of the gamma chain. F(1) is attached to F(0) by a central stalk formed by the gamma and epsilon chains, while a peripheral stalk is formed by the delta and b chains.

The protein localises to the cell membrane. F(1)F(0) ATP synthase produces ATP from ADP in the presence of a proton or sodium gradient. F-type ATPases consist of two structural domains, F(1) containing the extramembraneous catalytic core and F(0) containing the membrane proton channel, linked together by a central stalk and a peripheral stalk. During catalysis, ATP synthesis in the catalytic domain of F(1) is coupled via a rotary mechanism of the central stalk subunits to proton translocation. Functionally, key component of the F(0) channel; it plays a direct role in translocation across the membrane. A homomeric c-ring of between 10-14 subunits forms the central stalk rotor element with the F(1) delta and epsilon subunits. The chain is ATP synthase subunit c from Caldicellulosiruptor saccharolyticus (strain ATCC 43494 / DSM 8903 / Tp8T 6331).